We begin with the raw amino-acid sequence, 334 residues long: TPR repeat-containing protein MJ0798 (334 aa).

7 TPR repeats span residues 102 to 135 (WKLW…NQNT), 137 to 168 (LLCK…DRNN), 169 to 202 (YKAL…NPND), 204 to 235 (EALE…KPDD), 236 to 269 (IDLI…NPNV), 273 to 306 (EQIY…NLYH), and 308 to 333 (EIYE…YKKL).

The protein is TPR repeat-containing protein MJ0798 of Methanocaldococcus jannaschii (strain ATCC 43067 / DSM 2661 / JAL-1 / JCM 10045 / NBRC 100440) (Methanococcus jannaschii).